A 424-amino-acid polypeptide reads, in one-letter code: GTPase Obg (424 aa).

Positions 1 to 158 constitute an Obg domain; it reads MFVDKARIFV…RWISLELKLL (158 aa). One can recognise an OBG-type G domain in the interval 159 to 331; it reads ADVGLIGFPN…LLKECARVLS (173 aa). GTP contacts are provided by residues 165 to 172, 190 to 194, 212 to 215, 282 to 285, and 312 to 314; these read GFPNVGKS, FTTIT, DIPG, NKAD, and SAA. S172 and T192 together coordinate Mg(2+). Residues 345-424 enclose the OCT domain; sequence RFVPEDKHFT…LNDFEFEFLK (80 aa).

Belongs to the TRAFAC class OBG-HflX-like GTPase superfamily. OBG GTPase family. Monomer. Mg(2+) is required as a cofactor.

The protein resides in the cytoplasm. An essential GTPase which binds GTP, GDP and possibly (p)ppGpp with moderate affinity, with high nucleotide exchange rates and a fairly low GTP hydrolysis rate. Plays a role in control of the cell cycle, stress response, ribosome biogenesis and in those bacteria that undergo differentiation, in morphogenesis control. The sequence is that of GTPase Obg from Clostridium acetobutylicum (strain ATCC 824 / DSM 792 / JCM 1419 / IAM 19013 / LMG 5710 / NBRC 13948 / NRRL B-527 / VKM B-1787 / 2291 / W).